The chain runs to 61 residues: Small ribosomal subunit protein uS14 (61 aa).

Zn(2+) contacts are provided by C24, C27, C40, and C43.

It belongs to the universal ribosomal protein uS14 family. Zinc-binding uS14 subfamily. Part of the 30S ribosomal subunit. Contacts proteins S3 and S10. Requires Zn(2+) as cofactor.

Binds 16S rRNA, required for the assembly of 30S particles and may also be responsible for determining the conformation of the 16S rRNA at the A site. The sequence is that of Small ribosomal subunit protein uS14 from Aliarcobacter butzleri (strain RM4018) (Arcobacter butzleri).